We begin with the raw amino-acid sequence, 241 residues long: 2-C-methyl-D-erythritol 4-phosphate cytidylyltransferase (241 aa).

It belongs to the IspD/TarI cytidylyltransferase family. IspD subfamily. In terms of assembly, homodimer.

It carries out the reaction 2-C-methyl-D-erythritol 4-phosphate + CTP + H(+) = 4-CDP-2-C-methyl-D-erythritol + diphosphate. It participates in isoprenoid biosynthesis; isopentenyl diphosphate biosynthesis via DXP pathway; isopentenyl diphosphate from 1-deoxy-D-xylulose 5-phosphate: step 2/6. Functionally, catalyzes the formation of 4-diphosphocytidyl-2-C-methyl-D-erythritol from CTP and 2-C-methyl-D-erythritol 4-phosphate (MEP). The protein is 2-C-methyl-D-erythritol 4-phosphate cytidylyltransferase of Yersinia pseudotuberculosis serotype IB (strain PB1/+).